Consider the following 437-residue polypeptide: Testis-specific Y-encoded-like protein 1 (437 aa).

The segment at 1–81 (MSGLDGVKRT…QDAAGRGGTP (81 aa)) is disordered. The span at 11-26 (TPLQTHSIIISDQVPS) shows a compositional bias: polar residues. Basic and acidic residues predominate over residues 28–40 (QDAHQYLRLRDQS). Residue Lys156 forms a Glycyl lysine isopeptide (Lys-Gly) (interchain with G-Cter in SUMO2) linkage.

It belongs to the nucleosome assembly protein (NAP) family. Ubiquitinated by the CRL2(APPBP2) complex, which recognizes the Arg-Xaa-Xaa-Gly sequence at the C-terminus, leading to its degradation. Expressed in testis, ovary, liver, spleen, brain, kidney, prostate, lung, liver, and heart.

The protein localises to the nucleus. The protein resides in the nucleolus. This is Testis-specific Y-encoded-like protein 1 (TSPYL1) from Homo sapiens (Human).